The primary structure comprises 492 residues: 3-octaprenyl-4-hydroxybenzoate carboxy-lyase (492 aa).

Asn-172 contributes to the Mn(2+) binding site. Prenylated FMN-binding positions include 175 to 177, 189 to 191, and 194 to 195; these read IYR, RWL, and RG. Glu-238 contacts Mn(2+). The active-site Proton donor is Asp-287.

It belongs to the UbiD family. As to quaternary structure, homohexamer. Prenylated FMN is required as a cofactor. It depends on Mn(2+) as a cofactor.

The protein localises to the cell membrane. The catalysed reaction is a 4-hydroxy-3-(all-trans-polyprenyl)benzoate + H(+) = a 2-(all-trans-polyprenyl)phenol + CO2. Its pathway is cofactor biosynthesis; ubiquinone biosynthesis. Catalyzes the decarboxylation of 3-octaprenyl-4-hydroxy benzoate to 2-octaprenylphenol, an intermediate step in ubiquinone biosynthesis. This is 3-octaprenyl-4-hydroxybenzoate carboxy-lyase from Pasteurella multocida (strain Pm70).